The chain runs to 359 residues: Nicotinate-nucleotide--dimethylbenzimidazole phosphoribosyltransferase (359 aa).

The active-site Proton acceptor is the E318.

It belongs to the CobT family. In terms of assembly, homodimer.

It catalyses the reaction 5,6-dimethylbenzimidazole + nicotinate beta-D-ribonucleotide = alpha-ribazole 5'-phosphate + nicotinate + H(+). The protein operates within nucleoside biosynthesis; alpha-ribazole biosynthesis; alpha-ribazole from 5,6-dimethylbenzimidazole: step 1/2. Functionally, catalyzes the synthesis of alpha-ribazole-5'-phosphate from nicotinate mononucleotide (NAMN) and 5,6-dimethylbenzimidazole (DMB). The sequence is that of Nicotinate-nucleotide--dimethylbenzimidazole phosphoribosyltransferase from Escherichia coli O81 (strain ED1a).